The sequence spans 127 residues: Protein ApaG (127 aa).

The ApaG domain maps to 3-127; the sequence is DQPPTEIQIS…FRLAAATVFH (125 aa).

In Acidithiobacillus ferrooxidans (strain ATCC 23270 / DSM 14882 / CIP 104768 / NCIMB 8455) (Ferrobacillus ferrooxidans (strain ATCC 23270)), this protein is Protein ApaG.